A 98-amino-acid polypeptide reads, in one-letter code: NADH-ubiquinone oxidoreductase chain 4L (98 aa).

3 helical membrane passes run 1–21, 29–49, and 61–81; these read MPYI…GTLM, SLLC…LLSL, and LILL…LVMI.

This sequence belongs to the complex I subunit 4L family. As to quaternary structure, core subunit of respiratory chain NADH dehydrogenase (Complex I) which is composed of 45 different subunits.

It localises to the mitochondrion inner membrane. The catalysed reaction is a ubiquinone + NADH + 5 H(+)(in) = a ubiquinol + NAD(+) + 4 H(+)(out). In terms of biological role, core subunit of the mitochondrial membrane respiratory chain NADH dehydrogenase (Complex I) which catalyzes electron transfer from NADH through the respiratory chain, using ubiquinone as an electron acceptor. Part of the enzyme membrane arm which is embedded in the lipid bilayer and involved in proton translocation. The polypeptide is NADH-ubiquinone oxidoreductase chain 4L (MT-ND4L) (Elephas maximus (Indian elephant)).